The following is a 165-amino-acid chain: MISDDTDQFNPRDAKSPEAAKGKSAKRREARQMATQALYQWHMAGHALNEIEAQFRVDNDFSNVDGAYFRELLHGVATNKTEIDTALSPCLDLTIEELDPVELAVLRLSTFELLKRIDVPYRVVINEGIELAKVYGSTDGHKFVNGVLDKLAPRLREVEVKAHKR.

Residues 1-27 (MISDDTDQFNPRDAKSPEAAKGKSAKR) form a disordered region. The segment covering 10–21 (NPRDAKSPEAAK) has biased composition (basic and acidic residues).

Belongs to the NusB family.

In terms of biological role, involved in transcription antitermination. Required for transcription of ribosomal RNA (rRNA) genes. Binds specifically to the boxA antiterminator sequence of the ribosomal RNA (rrn) operons. The sequence is that of Transcription antitermination protein NusB from Pseudomonas savastanoi pv. phaseolicola (strain 1448A / Race 6) (Pseudomonas syringae pv. phaseolicola (strain 1448A / Race 6)).